The sequence spans 132 residues: Small ribosomal subunit protein uS8 (132 aa).

It belongs to the universal ribosomal protein uS8 family. Part of the 30S ribosomal subunit. Contacts proteins S5 and S12.

Its function is as follows. One of the primary rRNA binding proteins, it binds directly to 16S rRNA central domain where it helps coordinate assembly of the platform of the 30S subunit. This Staphylococcus haemolyticus (strain JCSC1435) protein is Small ribosomal subunit protein uS8.